Reading from the N-terminus, the 153-residue chain is Aspartate carbamoyltransferase regulatory chain (153 aa).

Residues Cys-109, Cys-114, Cys-138, and Cys-141 each coordinate Zn(2+).

Belongs to the PyrI family. Contains catalytic and regulatory chains. The cofactor is Zn(2+).

Its function is as follows. Involved in allosteric regulation of aspartate carbamoyltransferase. This chain is Aspartate carbamoyltransferase regulatory chain, found in Vibrio campbellii (strain ATCC BAA-1116).